The sequence spans 271 residues: Putative phosphoenolpyruvate synthase regulatory protein (271 aa).

ADP is bound at residue 151–158; it reads GVSRSGKT.

It belongs to the pyruvate, phosphate/water dikinase regulatory protein family. PSRP subfamily.

The catalysed reaction is [pyruvate, water dikinase] + ADP = [pyruvate, water dikinase]-phosphate + AMP + H(+). It catalyses the reaction [pyruvate, water dikinase]-phosphate + phosphate + H(+) = [pyruvate, water dikinase] + diphosphate. In terms of biological role, bifunctional serine/threonine kinase and phosphorylase involved in the regulation of the phosphoenolpyruvate synthase (PEPS) by catalyzing its phosphorylation/dephosphorylation. In Burkholderia cenocepacia (strain ATCC BAA-245 / DSM 16553 / LMG 16656 / NCTC 13227 / J2315 / CF5610) (Burkholderia cepacia (strain J2315)), this protein is Putative phosphoenolpyruvate synthase regulatory protein.